Reading from the N-terminus, the 180-residue chain is MATQTVFDFPDDVLQQPPMPADNAFSDKDVKGQDVELSKYKGKVLLIVNVASQCGFTNSNYPELTTLYQKYKDQGFEILAFPCNQFGGQEPGSNEEIQVFACTRFKAEYPVFSKVNVNGKEADPLYKFLKSSKGGFLGDSIKWNFTKFLVDREGKVVDRYAPTTSPLSIEKDIKKLLNVA.

C54 is a catalytic residue.

This sequence belongs to the glutathione peroxidase family.

Its subcellular location is the cytoplasm. It catalyses the reaction a hydroperoxy polyunsaturated fatty acid + 2 glutathione = a hydroxy polyunsaturated fatty acid + glutathione disulfide + H2O. Protects cells and enzymes from oxidative damage, by catalyzing the reduction of hydrogen peroxide, lipid peroxides and organic hydroperoxide, by glutathione. The protein is Probable phospholipid hydroperoxide glutathione peroxidase (GPXHA-2) of Helianthus annuus (Common sunflower).